The primary structure comprises 355 residues: Syntaxin-5 (355 aa).

Residues 1-333 (MIPRKRYGSK…KYFQSVTSNR (333 aa)) are Cytoplasmic-facing. The IxM motif; signal for cargo packaging into COPII-coated vesicles signature appears at 245 to 247 (IDM). The t-SNARE coiled-coil homology domain maps to 263-325 (DSYIQSRADT…EAAHSEILKY (63 aa)). A coiled-coil region spans residues 287 to 318 (FQQLAHMVKEQEETIQRIDENVLGAQLDVEAA). Residues 334–354 (WLMVKIFLILIVFFIIFVVFL) form a helical; Anchor for type IV membrane protein membrane-spanning segment. Ala355 is a topological domain (vesicular).

Belongs to the syntaxin family. Part of a ternary complex containing STX5A, NSFL1C and VCP. Part of a unique SNARE complex composed of the Golgi SNAREs GOSR1, GOSR2 and YKT6. This complex also includes VTI1A. Component of a SNARE complex consisting of STX5, YKT6, GOSR1 and BET1L. Interacts with BET1L. Interacts with BET1. Interacts with COG4. Interacts with GM130/GOLGA2. Interacts (via IxM motif) with SEC24C and SEC24D; mediates STX5 packaging into COPII-coated vesicles. Interacts with VLDLR; this interaction mediates VLDLR translocation from the endoplasmic reticulum to the plasma membrane. In terms of tissue distribution, expressed in the brain, heart, spleen, lung, liver, kidney and testis.

The protein localises to the endoplasmic reticulum-Golgi intermediate compartment membrane. It localises to the golgi apparatus membrane. Functionally, mediates endoplasmic reticulum to Golgi transport. Together with p115/USO1 and GM130/GOLGA2, involved in vesicle tethering and fusion at the cis-Golgi membrane to maintain the stacked and inter-connected structure of the Golgi apparatus. In terms of biological role, required for Golgi to endoplasmic reticulum retrogade transport, and for intra-Golgi transport. This Rattus norvegicus (Rat) protein is Syntaxin-5 (Stx5).